Reading from the N-terminus, the 297-residue chain is Acetyl-coenzyme A carboxylase carboxyl transferase subunit beta (297 aa).

A disordered region spans residues 1 to 23; it reads MSWIERILGRTSSSSSSSKSKVP. One can recognise a CoA carboxyltransferase N-terminal domain in the interval 26-295; sequence VWTKCTSCEQ…PFKTAELIVE (270 aa). Residues Cys-30, Cys-33, Cys-49, and Cys-52 each coordinate Zn(2+). Residues 30 to 52 form a C4-type zinc finger; sequence CTSCEQVLYSEELKRNMHVCPKC.

It belongs to the AccD/PCCB family. Acetyl-CoA carboxylase is a heterohexamer composed of biotin carboxyl carrier protein (AccB), biotin carboxylase (AccC) and two subunits each of ACCase subunit alpha (AccA) and ACCase subunit beta (AccD). The cofactor is Zn(2+).

It localises to the cytoplasm. The enzyme catalyses N(6)-carboxybiotinyl-L-lysyl-[protein] + acetyl-CoA = N(6)-biotinyl-L-lysyl-[protein] + malonyl-CoA. Its pathway is lipid metabolism; malonyl-CoA biosynthesis; malonyl-CoA from acetyl-CoA: step 1/1. Component of the acetyl coenzyme A carboxylase (ACC) complex. Biotin carboxylase (BC) catalyzes the carboxylation of biotin on its carrier protein (BCCP) and then the CO(2) group is transferred by the transcarboxylase to acetyl-CoA to form malonyl-CoA. This is Acetyl-coenzyme A carboxylase carboxyl transferase subunit beta from Actinobacillus pleuropneumoniae serotype 3 (strain JL03).